The sequence spans 470 residues: Aminodeoxychorismate synthase component 1 (470 aa).

It belongs to the anthranilate synthase component I family. As to quaternary structure, monomer. Heterodimer consisting of two non-identical subunits: a glutamine amidotransferase subunit (PabA) and a aminodeoxychorismate synthase subunit (PabB). Mg(2+) serves as cofactor.

It carries out the reaction chorismate + L-glutamine = 4-amino-4-deoxychorismate + L-glutamate. The protein operates within cofactor biosynthesis; tetrahydrofolate biosynthesis; 4-aminobenzoate from chorismate: step 1/2. Its function is as follows. Part of a heterodimeric complex that catalyzes the two-step biosynthesis of 4-amino-4-deoxychorismate (ADC), a precursor of p-aminobenzoate (PABA) and tetrahydrofolate. In the first step, a glutamine amidotransferase (PabA) generates ammonia as a substrate that, along with chorismate, is used in the second step, catalyzed by aminodeoxychorismate synthase (PabB) to produce ADC. The polypeptide is Aminodeoxychorismate synthase component 1 (pabB) (Bacillus subtilis (strain 168)).